A 327-amino-acid chain; its full sequence is Beta-ketoacyl-[acyl-carrier-protein] synthase III 2 (327 aa).

Residues C114 and H251 contribute to the active site. The segment at 252–256 (SANLR) is ACP-binding. Residue N281 is part of the active site.

It belongs to the thiolase-like superfamily. FabH family. Homodimer.

Its subcellular location is the cytoplasm. It carries out the reaction malonyl-[ACP] + acetyl-CoA + H(+) = 3-oxobutanoyl-[ACP] + CO2 + CoA. It participates in lipid metabolism; fatty acid biosynthesis. Functionally, catalyzes the condensation reaction of fatty acid synthesis by the addition to an acyl acceptor of two carbons from malonyl-ACP. Catalyzes the first condensation reaction which initiates fatty acid synthesis and may therefore play a role in governing the total rate of fatty acid production. Possesses both acetoacetyl-ACP synthase and acetyl transacylase activities. Its substrate specificity determines the biosynthesis of branched-chain and/or straight-chain of fatty acids. This Bacillus cereus (strain ATCC 14579 / DSM 31 / CCUG 7414 / JCM 2152 / NBRC 15305 / NCIMB 9373 / NCTC 2599 / NRRL B-3711) protein is Beta-ketoacyl-[acyl-carrier-protein] synthase III 2.